Consider the following 512-residue polypeptide: Protein SHC1 (512 aa).

The segment covering 101–113 (EQDEFENDVEDDA) has biased composition (acidic residues). 2 disordered regions span residues 101 to 122 (EQDE…EKSQ) and 144 to 165 (DGNS…SVAL). 4 Sel1-like repeats span residues 318–353 (PDAQ…KRLH), 354–389 (IESV…TKNH), 390–429 (PAAM…SMAS), and 433–470 (CGAP…ALGH).

It belongs to the SKT5 family.

The protein localises to the cytoplasm. Its subcellular location is the cytoplasmic granule membrane. In terms of biological role, required for the activation of chitin synthase III (CHS3) activity during the sporulation process. This is Protein SHC1 (SHC1) from Saccharomyces cerevisiae (strain YJM789) (Baker's yeast).